Consider the following 79-residue polypeptide: Small ribosomal subunit protein bS18B (79 aa).

Belongs to the bacterial ribosomal protein bS18 family. In terms of assembly, part of the 30S ribosomal subunit. Forms a tight heterodimer with protein bS6.

Binds as a heterodimer with protein bS6 to the central domain of the 16S rRNA, where it helps stabilize the platform of the 30S subunit. The protein is Small ribosomal subunit protein bS18B of Mycolicibacterium gilvum (strain PYR-GCK) (Mycobacterium gilvum (strain PYR-GCK)).